The sequence spans 663 residues: Cyclic nucleotide-gated channel alpha-2 (663 aa).

Residues 1 to 61 (MTEKANGVKS…QLAEMDAPQQ (61 aa)) are disordered. Residues 1–144 (MTEKANGVKS…PAGDWYYRWL (144 aa)) are Cytoplasmic-facing. Residues 12-23 (PANNHNHHAPPA) show a composition bias toward low complexity. The helical transmembrane segment at 145–166 (FLIALPVLYNWCLLVARACFSD) threads the bilayer. At 167 to 176 (LQKGYYIVWL) the chain is on the extracellular side. The chain crosses the membrane as a helical span at residues 177-197 (VLDYVSDVVYIADLFIRLRTG). The Cytoplasmic segment spans residues 198-222 (FLEQGLLVKDTKKLRDNYIHTMQFK). The chain crosses the membrane as a helical span at residues 223–241 (LDVASIIPTDLIYFAVGIH). At 242–246 (NPEVR) the chain is on the extracellular side. The helical transmembrane segment at 247 to 265 (FNRLLHFARMFEFFDRTET) threads the bilayer. The Cytoplasmic portion of the chain corresponds to 266–272 (RTSYPNI). Residues 270–378 (PNIFRISNLI…GNVGSMISNM (109 aa)) form an ion conduction pathway region. The chain crosses the membrane as a helical span at residues 273–296 (FRISNLILYILIIIHWNACIYYAI). Residues 297 to 319 (SKSIGFGVDTWVYPNITDPEYGY) are Extracellular-facing. 2 helical membrane-spanning segments follow: residues 320–354 (LSRE…LFVI) and 355–379 (FDFL…SNMN). A selectivity filter region spans residues 337 to 340 (TIGE). A C-linker region spans residues 380-456 (ATRAEFQAKI…STLKKVRIFQ (77 aa)). Residues 380–663 (ATRAEFQAKI…NSPEPPAEKP (284 aa)) lie on the Cytoplasmic side of the membrane. A cyclic nucleotide-binding domain region spans residues 460 to 580 (AGLLVELVLK…EERGREILMK (121 aa)). Residues glycine 520, serine 523, arginine 536, and threonine 537 each coordinate 3',5'-cyclic GMP. 3',5'-cyclic AMP contacts are provided by arginine 536 and threonine 537. The stretch at 597-651 (VQEKLEQLETNMDTLYTRFARLLAEYTGAQQKLKQRITVLETKMKQNNEDDSLSD) forms a coiled coil. Positions 640–663 (MKQNNEDDSLSDGMNSPEPPAEKP) are disordered.

It belongs to the cyclic nucleotide-gated cation channel (TC 1.A.1.5) family. CNGA2 subfamily. The olfactory cyclic nucleotide-gated channel is an heterotetramer composed of CNGA2, CNGA4 and CNGB1b subunits with 2:1:1 stoichiometry. In terms of tissue distribution, olfactory neurons.

It is found in the cell projection. The protein resides in the cilium membrane. It carries out the reaction Ca(2+)(in) = Ca(2+)(out). It catalyses the reaction Na(+)(in) = Na(+)(out). The enzyme catalyses K(+)(in) = K(+)(out). The catalysed reaction is NH4(+)(in) = NH4(+)(out). It carries out the reaction Rb(+)(in) = Rb(+)(out). It catalyses the reaction Li(+)(in) = Li(+)(out). The enzyme catalyses Cs(+)(in) = Cs(+)(out). Functionally, pore-forming subunit of the olfactory cyclic nucleotide-gated channel. Operates in the cilia of olfactory sensory neurons where chemical stimulation of the odorant is converted to an electrical signal. Mediates odorant-induced cAMP-dependent Ca(2+) influx triggering neuron depolarization. The rise of intracellular Ca(2+) levels potentiates the olfactory response by activating Ca(2+)-dependent Cl(-) channels, but it also serves as a negative feedback signal to desensitize the channel for rapid adaptation to odorants. Conducts cAMP- and cGMP-gated ion currents, with permeability for monovalent and divalent cations. This chain is Cyclic nucleotide-gated channel alpha-2, found in Bos taurus (Bovine).